The sequence spans 695 residues: MNIKTKSFTMGKHIVTLETGRIARQAHGAVLASMDDTQVLVTVVSSKETRPGQDFFPLSVDYIEKTYSTGKIPGSFLKREARPSEKETLTSRLIDRTIRPLFPNGFMNEIQVLITVVSANSEVNPDIISMLGVSAALSISGVPFSRPIGGSRVGYSNGEYILNPTYIELTNSDLDMVVAGTDEAVLMVESEANELSEEIMLGAVVYAHEQYQVAITNIAEFTTEVGMQKWDWIAPITNEVLLSDIKSKFGKEINKAYQIKEKLDRHAKIDNIRMAAIEALENENENGNSAEEVSKYFKEVEKSTVRERILNNDSRIDGRNNETVRELKIETGILKNTHGSALFTRGETQALVVTTLGPKSDAQLIEKLESPERQNNYFLLHYNFPPYCVGETGRLATIKRREIGHGHLARRGITACLPSIEEFPYTVRVVSEITESNGSSSMASVCGSSLSLMDAGVPIKAPIAGIAMGLVKENDRFTVLTDILGDEDHLGDMDFKVAGTSRGVNALQMDIKIQSITHEIMEIALKQAKEARLNILGQMNQVICEPNTSNKNTPKTTIIKIKTDKIRDLIGRGGETIKGIISTSCASIDVDDSGNVNIFSNNQKSFDTAVQMVKDVTAIPEVNKVYTGKVVKIVEFGAFINIMPNQDGLLHISEISHERVEKVKDHIREGDKIDVKVIGLDRGRIKLSRKVLLEK.

Mg(2+) is bound by residues D488 and D494. Residues 554–613 form the KH domain; the sequence is PKTTIIKIKTDKIRDLIGRGGETIKGIISTSCASIDVDDSGNVNIFSNNQKSFDTAVQMV. One can recognise an S1 motif domain in the interval 623–690; it reads NKVYTGKVVK…DRGRIKLSRK (68 aa).

The protein belongs to the polyribonucleotide nucleotidyltransferase family. Component of the RNA degradosome, which is a multiprotein complex involved in RNA processing and mRNA degradation. The cofactor is Mg(2+).

It is found in the cytoplasm. It catalyses the reaction RNA(n+1) + phosphate = RNA(n) + a ribonucleoside 5'-diphosphate. Its function is as follows. Involved in mRNA degradation. Catalyzes the phosphorolysis of single-stranded polyribonucleotides processively in the 3'- to 5'-direction. In Vesicomyosocius okutanii subsp. Calyptogena okutanii (strain HA), this protein is Polyribonucleotide nucleotidyltransferase.